Consider the following 104-residue polypeptide: Urease subunit beta (104 aa).

It belongs to the urease beta subunit family. As to quaternary structure, heterotrimer of UreA (gamma), UreB (beta) and UreC (alpha) subunits. Three heterotrimers associate to form the active enzyme.

The protein localises to the cytoplasm. The catalysed reaction is urea + 2 H2O + H(+) = hydrogencarbonate + 2 NH4(+). It participates in nitrogen metabolism; urea degradation; CO(2) and NH(3) from urea (urease route): step 1/1. This is Urease subunit beta from Rhodococcus jostii (strain RHA1).